The chain runs to 303 residues: UDP-3-O-acyl-N-acetylglucosamine deacetylase (303 aa).

Residues H78, H237, and D241 each coordinate Zn(2+). H264 acts as the Proton donor in catalysis.

The protein belongs to the LpxC family. Requires Zn(2+) as cofactor.

It carries out the reaction a UDP-3-O-[(3R)-3-hydroxyacyl]-N-acetyl-alpha-D-glucosamine + H2O = a UDP-3-O-[(3R)-3-hydroxyacyl]-alpha-D-glucosamine + acetate. It participates in glycolipid biosynthesis; lipid IV(A) biosynthesis; lipid IV(A) from (3R)-3-hydroxytetradecanoyl-[acyl-carrier-protein] and UDP-N-acetyl-alpha-D-glucosamine: step 2/6. Functionally, catalyzes the hydrolysis of UDP-3-O-myristoyl-N-acetylglucosamine to form UDP-3-O-myristoylglucosamine and acetate, the committed step in lipid A biosynthesis. This Cellvibrio japonicus (strain Ueda107) (Pseudomonas fluorescens subsp. cellulosa) protein is UDP-3-O-acyl-N-acetylglucosamine deacetylase.